The following is a 143-amino-acid chain: Small ribosomal subunit protein bS6 (143 aa).

The segment at 100–143 (SPIIKMKDERREVVELTTSGSEDNQKDHHKEDLDKKTDEFSEEN) is disordered. Composition is skewed to basic and acidic residues over residues 104 to 113 (KMKDERREVV) and 122 to 143 (DNQK…SEEN).

This sequence belongs to the bacterial ribosomal protein bS6 family.

Its function is as follows. Binds together with bS18 to 16S ribosomal RNA. The protein is Small ribosomal subunit protein bS6 of Hamiltonella defensa subsp. Acyrthosiphon pisum (strain 5AT).